Reading from the N-terminus, the 229-residue chain is Peptidase E (229 aa).

Active-site charge relay system residues include Ser120, Asp135, and His157.

This sequence belongs to the peptidase S51 family.

It localises to the cytoplasm. It catalyses the reaction Dipeptidase E catalyzes the hydrolysis of dipeptides Asp-|-Xaa. It does not act on peptides with N-terminal Glu, Asn or Gln, nor does it cleave isoaspartyl peptides.. Hydrolyzes dipeptides containing N-terminal aspartate residues. May play a role in allowing the cell to use peptide aspartate to spare carbon otherwise required for the synthesis of the aspartate family of amino acids. The chain is Peptidase E from Salmonella typhi.